We begin with the raw amino-acid sequence, 516 residues long: Lipid II flippase MurJ (516 aa).

Transmembrane regions (helical) follow at residues 93–113 (WALAVLSVVGIAGASWVVFAV), 133–153 (IMFPYIVFISLTTLASGVLNT), 159–179 (LPAFAPVLLNVAFIAAAVFVA), 188–208 (ALAWAVIVGGVLQFLVQLPGL), 233–253 (VLAKMVPATFAVSVAQLSLII), 275–295 (LMEFPTALLGVALGTILLPSL), 317–337 (VTFLLAAPSALALFFFATPLT), 358–378 (LATYGIGLVGIILIKILAPGF), 390–409 (IAIGVLIVTQLSNYVFVPLI), 448–468 (FFVQLVGAALVLAGLMHWCAI), and 483–503 (IALMAACLVLFAALYFGMLWV).

This sequence belongs to the MurJ/MviN family.

It localises to the cell inner membrane. Its pathway is cell wall biogenesis; peptidoglycan biosynthesis. Involved in peptidoglycan biosynthesis. Transports lipid-linked peptidoglycan precursors from the inner to the outer leaflet of the cytoplasmic membrane. In Burkholderia cenocepacia (strain ATCC BAA-245 / DSM 16553 / LMG 16656 / NCTC 13227 / J2315 / CF5610) (Burkholderia cepacia (strain J2315)), this protein is Lipid II flippase MurJ.